The following is a 283-amino-acid chain: MAQTLAQTKQISQSHTFDVSQSHHKTPDDTNSHSVIYSTQNLDLWYGENHALQNINLDIYENQITAIIGPSGCGKSTYIKTLNRMVELVPTVKTAGKILYRDQDIFDQKYSKEQLRTNVGMVFQQPNPFPKSIYDNITYGPKIHGIKNKKVLDEIVEKSLRGAAIWDELKDRLHTNAYSLSGGQQQRVCIARCLAIEPEVILMDEPTSALDPISTLRVEELVQELKEKYTIIMVTHNMQQAARVSDKTAFFLNGYVNEYDDTDKIFSNPSNKKTEDYISGRFG.

The span at 1 to 20 (MAQTLAQTKQISQSHTFDVS) shows a compositional bias: polar residues. Positions 1 to 32 (MAQTLAQTKQISQSHTFDVSQSHHKTPDDTNS) are disordered. The region spanning 37–278 (YSTQNLDLWY…PSNKKTEDYI (242 aa)) is the ABC transporter domain. 69–76 (GPSGCGKS) lines the ATP pocket.

Belongs to the ABC transporter superfamily. Phosphate importer (TC 3.A.1.7) family. The complex is composed of two ATP-binding proteins (PstB), two transmembrane proteins (PstC and PstA) and a solute-binding protein (PstS).

It localises to the cell membrane. The enzyme catalyses phosphate(out) + ATP + H2O = ADP + 2 phosphate(in) + H(+). Functionally, part of the ABC transporter complex PstSACB involved in phosphate import. Responsible for energy coupling to the transport system. In Staphylococcus aureus (strain MRSA252), this protein is Phosphate import ATP-binding protein PstB.